The chain runs to 279 residues: Tryptophan 2,3-dioxygenase (279 aa).

Substrate-binding positions include 48-52 (FIIQH), Y110, and R114. A heme-binding site is contributed by H237. Residue T251 participates in substrate binding.

It belongs to the tryptophan 2,3-dioxygenase family. In terms of assembly, homotetramer. Heme is required as a cofactor.

The catalysed reaction is L-tryptophan + O2 = N-formyl-L-kynurenine. The protein operates within amino-acid degradation; L-tryptophan degradation via kynurenine pathway; L-kynurenine from L-tryptophan: step 1/2. Its function is as follows. Heme-dependent dioxygenase that catalyzes the oxidative cleavage of the L-tryptophan (L-Trp) pyrrole ring and converts L-tryptophan to N-formyl-L-kynurenine. Catalyzes the oxidative cleavage of the indole moiety. The polypeptide is Tryptophan 2,3-dioxygenase (Bradyrhizobium sp. (strain ORS 278)).